The primary structure comprises 485 residues: Cytoplasmic tRNA 2-thiolation protein 2 (485 aa).

This sequence belongs to the CTU2/NCS2 family.

The protein localises to the cytoplasm. Its pathway is tRNA modification; 5-methoxycarbonylmethyl-2-thiouridine-tRNA biosynthesis. Functionally, plays a central role in 2-thiolation of mcm(5)S(2)U at tRNA wobble positions of tRNA(Lys), tRNA(Glu) and tRNA(Gln). May act by forming a heterodimer with NCS6 that ligates sulfur from thiocarboxylated URM1 onto the uridine of tRNAs at wobble position. Prior mcm(5) tRNA modification by the elongator complex is required for 2-thiolation. May also be involved in protein urmylation. This chain is Cytoplasmic tRNA 2-thiolation protein 2, found in Vanderwaltozyma polyspora (strain ATCC 22028 / DSM 70294 / BCRC 21397 / CBS 2163 / NBRC 10782 / NRRL Y-8283 / UCD 57-17) (Kluyveromyces polysporus).